A 197-amino-acid polypeptide reads, in one-letter code: MGCCTGRCSLICLCALQLVSALERQIFDFLGFQWAPILGNFLHIIVVILGLFGTIQYRPRYIMVYTVWTALWVTWNVFIICFYLEVGGLSKDTDLMTFNISVHRSWWREHGPGCVRRVLPPSAHGMMDDYTYVSVTGCIVDFQYLEVIHSAVQILLSLVGFVYACYVISISMEEEDTYSCDLQVCKHLFIQMLQIIE.

4 helical membrane-spanning segments follow: residues 2–22, 35–55, 62–82, and 152–172; these read GCCT…VSAL, APIL…FGTI, IMVY…IICF, and VQIL…SISM.

It belongs to the NKAIN family. Interacts with ATP1B1.

The protein localises to the cell membrane. In Homo sapiens (Human), this protein is Sodium/potassium-transporting ATPase subunit beta-1-interacting protein 3 (NKAIN3).